The chain runs to 455 residues: tRNA modification GTPase MnmE (455 aa).

Residues Arg-26, Glu-86, and Arg-125 each coordinate (6S)-5-formyl-5,6,7,8-tetrahydrofolate. The TrmE-type G domain occupies 222 to 376 (GLKTAIIGRP…VEEKINQIFF (155 aa)). Asn-232 is a binding site for K(+). GTP is bound by residues 232–237 (NVGKSS), 251–257 (TDIAGTT), and 276–279 (DTAG). Ser-236 contacts Mg(2+). Positions 251, 253, and 256 each coordinate K(+). A Mg(2+)-binding site is contributed by Thr-257. (6S)-5-formyl-5,6,7,8-tetrahydrofolate is bound at residue Lys-455.

Belongs to the TRAFAC class TrmE-Era-EngA-EngB-Septin-like GTPase superfamily. TrmE GTPase family. In terms of assembly, homodimer. Heterotetramer of two MnmE and two MnmG subunits. It depends on K(+) as a cofactor.

The protein resides in the cytoplasm. In terms of biological role, exhibits a very high intrinsic GTPase hydrolysis rate. Involved in the addition of a carboxymethylaminomethyl (cmnm) group at the wobble position (U34) of certain tRNAs, forming tRNA-cmnm(5)s(2)U34. This chain is tRNA modification GTPase MnmE, found in Lactococcus lactis subsp. cremoris (strain SK11).